We begin with the raw amino-acid sequence, 254 residues long: Triosephosphate isomerase (254 aa).

12-14 (NWK) serves as a coordination point for substrate. Residue His-99 is the Electrophile of the active site. Residue Glu-169 is the Proton acceptor of the active site. Substrate contacts are provided by residues Gly-175, Ser-214, and 235 to 236 (GG).

It belongs to the triosephosphate isomerase family. Homodimer.

The protein localises to the cytoplasm. It catalyses the reaction D-glyceraldehyde 3-phosphate = dihydroxyacetone phosphate. It participates in carbohydrate biosynthesis; gluconeogenesis. Its pathway is carbohydrate degradation; glycolysis; D-glyceraldehyde 3-phosphate from glycerone phosphate: step 1/1. Involved in the gluconeogenesis. Catalyzes stereospecifically the conversion of dihydroxyacetone phosphate (DHAP) to D-glyceraldehyde-3-phosphate (G3P). The polypeptide is Triosephosphate isomerase (Chelativorans sp. (strain BNC1)).